A 142-amino-acid polypeptide reads, in one-letter code: MAKKIEGYIKLQVPAGAANPSPPIGPALGQRGLNIMEFCKAFNAATQKMEQGMPIPVVITAFSDRSFTFAMKTPPASYFLKKAAKVTSGSKTPGRASAGTVTVAQCREIAEAKMADLNANDLDQATKIIAGSARSMGLQVVE.

Belongs to the universal ribosomal protein uL11 family. In terms of assembly, part of the ribosomal stalk of the 50S ribosomal subunit. Interacts with L10 and the large rRNA to form the base of the stalk. L10 forms an elongated spine to which L12 dimers bind in a sequential fashion forming a multimeric L10(L12)X complex. Post-translationally, one or more lysine residues are methylated.

In terms of biological role, forms part of the ribosomal stalk which helps the ribosome interact with GTP-bound translation factors. This Parvibaculum lavamentivorans (strain DS-1 / DSM 13023 / NCIMB 13966) protein is Large ribosomal subunit protein uL11.